A 396-amino-acid chain; its full sequence is MAANLWLILGLLASHSSDLAAVREAPPTAVTTPIQNLHIDPAHYTLSWDPAPGADITTGAFCRKGRDIFVWADPGLARCSFQSLSLCHVTNFTVFLGKDRAVAGSIQFPPDDDGDHEAAAQDLRCWVHEGQLSCQWERGPKATGDVHYRMFWRDVRLGPAHNRECPHYHSLDVNTAGPAPHGGHEGCTLDLDTVLGSTPNSPDLVPQVTITVNGSGRAGPVPCMDNTVDLQRAEVLAPPTLTVECNGSEAHARWVARNRFHHGLLGYTLQVNQSSRSEPQEYNVSIPHFWVPNAGAISFRVKSRSEVYPRKLSSWSEAWGLVCPPEVMPVKTALVTSVATVLGAGLVAAGLLLWWRKSLLYRLCPPIPRLRLPLAGEMVVWEPALEDCEVTPVTDA.

Residues 1–16 (MAANLWLILGLLASHS) form the signal peptide. Topologically, residues 17 to 331 (SDLAAVREAP…VCPPEVMPVK (315 aa)) are extracellular. 5 disulfide bridges follow: C62/C79, C87/C223, C125/C134, C165/C187, and C245/C323. N91 carries an N-linked (GlcNAc...) asparagine glycan. N213, N246, N272, and N283 each carry an N-linked (GlcNAc...) asparagine glycan. Positions 312–316 (LSSWS) match the WSXWS motif motif. The helical transmembrane segment at 332 to 355 (TALVTSVATVLGAGLVAAGLLLWW) threads the bilayer. Residues 356 to 396 (RKSLLYRLCPPIPRLRLPLAGEMVVWEPALEDCEVTPVTDA) are Cytoplasmic-facing. Residue K357 forms a Glycyl lysine isopeptide (Lys-Gly) (interchain with G-Cter in ubiquitin) linkage. Residues 363–371 (LCPPIPRLR) carry the Box 1 motif motif.

This sequence belongs to the type I cytokine receptor family. Type 5 subfamily. Interacts with IL3. Heterodimer of an alpha and a beta subunit. The beta subunit is common to the IL3, IL5 and GM-CSF receptors. Post-translationally, ubiquitinated at Lys-357 by RNFT2 in response to IL3. Ubiquitination leads ligand-induced degradation by the proteasome. Ubiquitinated by RNF128 via 'Lys-27'-linked polyubiquitination, facilitating its degradation through the lysosomal pathway.

It is found in the cell membrane. The protein localises to the endomembrane system. Cell surface receptor for IL3 expressed on hematopoietic progenitor cells, monocytes and B-lymphocytes that controls the production and differentiation of hematopoietic progenitor cells into lineage-restricted cells. Ligand stimulation rapidly induces hetrodimerization with IL3RB, phosphorylation and enzyme activity of effector proteins such as JAK2 and PI3K that play a role in signaling cell proliferation and differentiation. Activation of JAK2 leads to STAT5-mediated transcriptional program. This is Interleukin-3 receptor subunit alpha (Il3ra) from Mus musculus (Mouse).